The chain runs to 168 residues: Alkyl hydroperoxide reductase C (168 aa).

In terms of domain architecture, Thioredoxin spans 1-138 (EFIEVSEESF…LVNKIKAAQY (138 aa)). C28 acts as the Cysteine sulfenic acid (-SOH) intermediate in catalysis.

It belongs to the peroxiredoxin family. AhpC/Prx1 subfamily. As to quaternary structure, homodimer; disulfide-linked, upon oxidation. 5 homodimers assemble to form a ring-like decamer.

The protein resides in the cytoplasm. It carries out the reaction a hydroperoxide + NADH + H(+) = an alcohol + NAD(+) + H2O. Thiol-specific peroxidase that catalyzes the reduction of hydrogen peroxide and organic hydroperoxides to water and alcohols, respectively. Plays a role in cell protection against oxidative stress by detoxifying peroxides. The polypeptide is Alkyl hydroperoxide reductase C (Ferdinandcohnia aciditolerans (strain JCM 32973 / CCTCC AB 2017280 / YN-1) (Bacillus aciditolerans)).